Reading from the N-terminus, the 152-residue chain is Xanthine-guanine phosphoribosyltransferase (152 aa).

5-phospho-alpha-D-ribose 1-diphosphate contacts are provided by residues 37–38 (RG), Arg-69, and 88–96 (DDLVDTGGT). Residue Arg-69 coordinates GMP. Residue Asp-89 participates in Mg(2+) binding. Asp-92 and Ile-135 together coordinate guanine. 2 residues coordinate xanthine: Asp-92 and Ile-135. Residues 92-96 (DTGGT) and 134-135 (WI) contribute to the GMP site.

It belongs to the purine/pyrimidine phosphoribosyltransferase family. XGPT subfamily. As to quaternary structure, homotetramer. Mg(2+) is required as a cofactor.

The protein resides in the cell inner membrane. It carries out the reaction GMP + diphosphate = guanine + 5-phospho-alpha-D-ribose 1-diphosphate. The enzyme catalyses XMP + diphosphate = xanthine + 5-phospho-alpha-D-ribose 1-diphosphate. The catalysed reaction is IMP + diphosphate = hypoxanthine + 5-phospho-alpha-D-ribose 1-diphosphate. It participates in purine metabolism; GMP biosynthesis via salvage pathway; GMP from guanine: step 1/1. Its pathway is purine metabolism; XMP biosynthesis via salvage pathway; XMP from xanthine: step 1/1. Its function is as follows. Purine salvage pathway enzyme that catalyzes the transfer of the ribosyl-5-phosphate group from 5-phospho-alpha-D-ribose 1-diphosphate (PRPP) to the N9 position of the 6-oxopurines guanine and xanthine to form the corresponding ribonucleotides GMP (guanosine 5'-monophosphate) and XMP (xanthosine 5'-monophosphate), with the release of PPi. To a lesser extent, also acts on hypoxanthine. This chain is Xanthine-guanine phosphoribosyltransferase, found in Erwinia tasmaniensis (strain DSM 17950 / CFBP 7177 / CIP 109463 / NCPPB 4357 / Et1/99).